The primary structure comprises 256 residues: MALVLLTNDDGIFAPGINALRARMEQIPGLEVWAVAPDRERSASGHAITTYRPLFPVRVEIPGAVAPCISVTGTPADSAKLAIEAILPRRPDLVISGINRGANLGTDIFYSGTVAAALEGPILGIPALAVSLDSMTSSDYSAAADFAAQLALKVLEEGLPEGTLLNVNVPALPREAIKGVRVTKVGRRIYRDQWVRRMHPRGQEYYWLAGELAEIHNDRESDVSAVEAGYISVTPVHLDLTRYDQMDRLRQWNLTF.

Residues Asp9, Asp10, Ser42, and Asn99 each contribute to the a divalent metal cation site.

The protein belongs to the SurE nucleotidase family. A divalent metal cation is required as a cofactor.

It localises to the cytoplasm. The enzyme catalyses a ribonucleoside 5'-phosphate + H2O = a ribonucleoside + phosphate. Functionally, nucleotidase that shows phosphatase activity on nucleoside 5'-monophosphates. The chain is 5'-nucleotidase SurE from Symbiobacterium thermophilum (strain DSM 24528 / JCM 14929 / IAM 14863 / T).